Reading from the N-terminus, the 681-residue chain is Probable L-type lectin-domain containing receptor kinase S.7 (681 aa).

The first 21 residues, 1 to 21, serve as a signal peptide directing secretion; it reads MSLSRKLLVIFFTWITALSMS. Topologically, residues 22–305 are extracellular; that stretch reads KPIFVSSDNM…PSKKRRHRHN (284 aa). Residues 30 to 265 form a legume-lectin like region; the sequence is NMNFTFKSFT…IHLIENWSFK (236 aa). Residues asparagine 32, asparagine 42, asparagine 86, asparagine 121, asparagine 135, asparagine 261, and asparagine 281 are each glycosylated (N-linked (GlcNAc...) asparagine). A helical transmembrane segment spans residues 306-326; it reads LAIGLGISCPVLICLALFVFG. Over 327–681 the chain is Cytoplasmic; the sequence is YFTLKKWKSV…EGDSIVYVVS (355 aa). A Protein kinase domain is found at 365–643; it reads FHSSRVIGRG…RVLQILNNEI (279 aa). ATP contacts are provided by residues 371–379 and lysine 394; that span reads IGRGAFGNV. Aspartate 493 (proton acceptor) is an active-site residue.

This sequence in the C-terminal section; belongs to the protein kinase superfamily. Ser/Thr protein kinase family. It in the N-terminal section; belongs to the leguminous lectin family.

It is found in the cell membrane. The catalysed reaction is L-seryl-[protein] + ATP = O-phospho-L-seryl-[protein] + ADP + H(+). It catalyses the reaction L-threonyl-[protein] + ATP = O-phospho-L-threonyl-[protein] + ADP + H(+). Functionally, involved in resistance response to the pathogenic oomycetes Phytophthora infestans and Phytophthora capsici. This chain is Probable L-type lectin-domain containing receptor kinase S.7, found in Arabidopsis thaliana (Mouse-ear cress).